Consider the following 321-residue polypeptide: L-carnitine dehydrogenase (321 aa).

Residue 14–19 coordinates NAD(+); that stretch reads GSGVIG.

Belongs to the 3-hydroxyacyl-CoA dehydrogenase family. L-carnitine dehydrogenase subfamily. Homodimer.

It is found in the cytoplasm. It catalyses the reaction carnitine + NAD(+) = 3-dehydrocarnitine + NADH + H(+). The protein operates within amine and polyamine metabolism; carnitine metabolism. Catalyzes the NAD(+)-dependent oxidation of L-carnitine to 3-dehydrocarnitine. The polypeptide is L-carnitine dehydrogenase (Pseudomonas putida (strain ATCC 47054 / DSM 6125 / CFBP 8728 / NCIMB 11950 / KT2440)).